The sequence spans 66 residues: LTCVTKDTIFGITTQNCPAGQNLCFIRRHYINHRYTEITRGCTATCPKPTNVRETIHCCNTDKCNE.

Intrachain disulfides connect cysteine 3–cysteine 24, cysteine 17–cysteine 42, cysteine 46–cysteine 58, and cysteine 59–cysteine 64.

Belongs to the three-finger toxin family. Short-chain subfamily. Aminergic toxin sub-subfamily. In terms of tissue distribution, expressed by the venom gland.

The protein localises to the secreted. Functionally, non-competitive antagonist of alpha-2 adrenergic receptors (ADRA2) in smooth muscles, and partial antagonist of D3 dopamine receptors (DRD3) (inhibits 25% of methylspiperone binding to this receptor). Also shows a low antagonism on D2 dopamine receptors (DRD2) (short isoform). Shows high affinity to adrenergic receptors (Ki=14 nM (ADRA2A), Ki=73 nM (ADRA2B), and Ki=38 nM (ADRA2C)). Increases heart rate and blood catecholamine concentrations. The polypeptide is Rho-elapitoxin-Da1b (Dendroaspis angusticeps (Eastern green mamba)).